Here is a 181-residue protein sequence, read N- to C-terminus: Insulin-like growth factor 2 (181 aa).

The signal sequence occupies residues 1–24 (MGIPMRKPLLVLLVFLALASCCYA). Positions 25 to 52 (AYRPSETLCGGELVDTLQFVCGDRGFYF) are b. Cystine bridges form between Cys-33–Cys-71, Cys-45–Cys-84, and Cys-70–Cys-75. The tract at residues 53-64 (SRPASRVNRRSR) is c. The a stretch occupies residues 65–85 (GIVEECCFRSCDLALLETYCA). The segment at 86 to 91 (TPAKSE) is d. The propeptide at 92–181 (RDVSTPPTVL…ASPEASGHRK (90 aa)) is e peptide. The interval 151–181 (EAKRHRPLTARPTRDPAAHGGASPEASGHRK) is disordered. The O-linked (GalNAc...) threonine glycan is linked to Thr-163.

Belongs to the insulin family. Interacts with MYORG; this interaction is required for IGF2 secretion. Interacts with integrins ITGAV:ITGB3 and ITGA6:ITGB4; integrin-binding is required for IGF2 signaling. Interacts with IGFBP2. In terms of processing, proteolytically processed by PCSK4, proIGF2 is cleaved at Arg-128 and Arg-92 to generate big-IGF2 and mature IGF2.

Its subcellular location is the secreted. Its function is as follows. The insulin-like growth factors possess growth-promoting activity. Major fetal growth hormone in mammals. Plays a key role in regulating fetoplacental development. IGF2 is influenced by placental lactogen. Also involved in tissue differentiation. In adults, involved in glucose metabolism in adipose tissue, skeletal muscle and liver. Acts as a ligand for integrin which is required for IGF2 signaling. Positively regulates myogenic transcription factor MYOD1 function by facilitating the recruitment of transcriptional coactivators, thereby controlling muscle terminal differentiation. Inhibits myoblast differentiation and modulates metabolism via increasing the mitochondrial respiration rate. In terms of biological role, preptin undergoes glucose-mediated co-secretion with insulin, and acts as a physiological amplifier of glucose-mediated insulin secretion. Exhibits osteogenic properties by increasing osteoblast mitogenic activity through phosphoactivation of MAPK1 and MAPK3. The chain is Insulin-like growth factor 2 from Sus scrofa (Pig).